A 516-amino-acid polypeptide reads, in one-letter code: 2-isopropylmalate synthase (516 aa).

The Pyruvate carboxyltransferase domain occupies 8 to 270 (IYIFDTTLRD…YTGIKTESIY (263 aa)). Residues D17, H205, H207, and N241 each contribute to the Mn(2+) site. The regulatory domain stretch occupies residues 394–516 (KLIYLNVVSG…DAGKIKSEYE (123 aa)).

It belongs to the alpha-IPM synthase/homocitrate synthase family. LeuA type 1 subfamily. As to quaternary structure, homodimer. Mn(2+) is required as a cofactor.

The protein resides in the cytoplasm. It catalyses the reaction 3-methyl-2-oxobutanoate + acetyl-CoA + H2O = (2S)-2-isopropylmalate + CoA + H(+). Its pathway is amino-acid biosynthesis; L-leucine biosynthesis; L-leucine from 3-methyl-2-oxobutanoate: step 1/4. Catalyzes the condensation of the acetyl group of acetyl-CoA with 3-methyl-2-oxobutanoate (2-ketoisovalerate) to form 3-carboxy-3-hydroxy-4-methylpentanoate (2-isopropylmalate). This is 2-isopropylmalate synthase from Syntrophus aciditrophicus (strain SB).